The sequence spans 213 residues: MTTGPSPIEMLTARNLECIRGEHRLFSNLSFSVNPGELMFVGGPNGSGKTSLLRLLCGLSLPDDGEIYWNGTDIRKLGVDYRDVMTYLGHLGGIKDDLTAIENLRISCALAGCEIDEDQAADALGQIGLAGREMLPARVLSQGQRRRVALARLLVTRTKLWILDEPLTALDVAAVELIKGILEHNLAKGGMVIMTTHQELVMSTVTVHHLVLS.

An ABC transporter domain is found at 11-213 (LTARNLECIR…TVTVHHLVLS (203 aa)). An ATP-binding site is contributed by 43 to 50 (GPNGSGKT).

Belongs to the ABC transporter superfamily. CcmA exporter (TC 3.A.1.107) family. In terms of assembly, the complex is composed of two ATP-binding proteins (CcmA) and two transmembrane proteins (CcmB).

The protein resides in the cell inner membrane. The enzyme catalyses heme b(in) + ATP + H2O = heme b(out) + ADP + phosphate + H(+). Its function is as follows. Part of the ABC transporter complex CcmAB involved in the biogenesis of c-type cytochromes; once thought to export heme, this seems not to be the case, but its exact role is uncertain. Responsible for energy coupling to the transport system. This chain is Cytochrome c biogenesis ATP-binding export protein CcmA, found in Nitrosomonas europaea (strain ATCC 19718 / CIP 103999 / KCTC 2705 / NBRC 14298).